Consider the following 319-residue polypeptide: HTH-type transcriptional regulator YidZ (319 aa).

One can recognise an HTH lysR-type domain in the interval 8–65; sequence LDLNLLLCLQLLMQERSVTKAAKRMNVTPSAVSKSLAKLRAWFDDPLFVNSPLGLSPT. The H-T-H motif DNA-binding region spans 25–44; that stretch reads VTKAAKRMNVTPSAVSKSLA.

Belongs to the LysR transcriptional regulatory family.

Functionally, involved in anaerobic NO protection. The protein is HTH-type transcriptional regulator YidZ of Escherichia coli O6:H1 (strain CFT073 / ATCC 700928 / UPEC).